Here is a 591-residue protein sequence, read N- to C-terminus: Paxillin (591 aa).

N-acetylmethionine is present on methionine 1. Positions 3-15 (DLDALLADLESTT) match the LD motif 1 motif. The segment at 17–139 (HISKRPVFLS…SPTVMSSSLG (123 aa)) is disordered. Residue tyrosine 31 is modified to Phosphotyrosine; by PTK6. Positions 45 to 54 (VPPPVPPPPS) are enriched in pro residues. The residue at position 83 (serine 83) is a Phosphoserine. At tyrosine 88 the chain carries Phosphotyrosine. The segment covering 89–99 (SSSAKNSSASN) has biased composition (low complexity). The residue at position 106 (serine 106) is a Phosphoserine. Tyrosine 118 carries the post-translational modification Phosphotyrosine; by PTK6. A phosphoserine mark is found at serine 119, serine 126, and serine 130. Residues 121–137 (PNKQKSAEPSPTVMSSS) show a composition bias toward polar residues. Threonine 132 bears the Phosphothreonine mark. Phosphoserine is present on residues serine 137, serine 140, and serine 143. The LD motif 2 motif lies at 144 to 156 (ELDRLLLELNAVQ). Residues 156–261 (QHSPPGFPAD…QQQTRISASS (106 aa)) form a disordered region. Tyrosine 181 carries the phosphotyrosine modification. The LD motif 3 signature appears at 216–228 (SVESLLDELESSV). Position 230 is a phosphoserine (serine 230). The span at 236-261 (TVNQGEMSSPQRVTSSQQQTRISASS) shows a compositional bias: polar residues. Serine 244 is modified (phosphoserine; by CDK5). Serine 250, serine 258, serine 261, serine 272, serine 303, serine 322, serine 332, and serine 340 each carry phosphoserine. The tract at residues 262–315 (ATRELDELMASLSDFKMQGLEQRVDGERPWAAGWPPSSRQSSPEGQDEGGFMAQ) is required for binding to PARVA and ILK. Positions 265 to 276 (ELDELMASLSDF) match the LD motif 4 motif. Residues 289–338 (RPWAAGWPPSSRQSSPEGQDEGGFMAQGKTGSSSPPGGLSKPGSQLDSML) are disordered. The segment covering 315 to 334 (QGKTGSSSPPGGLSKPGSQL) has biased composition (low complexity). Residues 333 to 345 (QLDSMLGSLQSDL) carry the LD motif 5 motif. LIM zinc-binding domains lie at 356-415 (GVCG…LFSP), 416-473 (RCYY…DMFA), 474-533 (PKCG…RRGS), and 534-591 (LCSG…KLFC). Serine 533 carries the phosphoserine modification.

The protein belongs to the paxillin family. As to quaternary structure, interacts in vitro with VCL/vinculin as well as to the SH3 domain of SRC and, when tyrosine phosphorylated, to the SH2 domain of CRK. Interacts with GIT1. Interacts with NUDT16L1/SDOS. Interacts with PTK2/FAK1. Interacts with PTK2B/PYK2. Interacts with ASAP2. Interacts with unphosphorylated ITGA4. Interacts with RNF5. Interacts with PDCD10. Interacts with NEK3, the interaction is prolactin-dependent. Interacts with PTK6. Interacts with TGFB1I1. Interacts with SORBS1. Interacts with PARVB. Interacts (via LD motif 4) with PARVA/PARVIN. Interacts (via LD motif 4) with ILK. Interacts (via cytoplasmic domain) with CEACAM1; the interaction is phosphotyrosyl-dependent. Interacts with LIMA1; this complex stabilizes actin dynamics. Interacts with CD36 (via C-terminus). Interacts with TRIM15. Interacts with PAK4; PAK4 acts as a scaffold to suppport PAXI phosphorylation at Ser-272. Phosphorylated by MAPK1/ERK2. Phosphorylated on tyrosine residues during integrin-mediated cell adhesion, embryonic development, fibroblast transformation and following stimulation of cells by mitogens. Phosphorylation at Ser-244 by CDK5 reduces its interaction with PTK2/FAK1 in matrix-cell focal adhesions (MCFA) during oligodendrocytes (OLs) differentiation. Phosphorylation at Tyr-31 and Tyr-118 by PTK6 promote the activation of RAC1 via CRK/CrKII, thereby promoting migration and invasion. Phosphorylation at Ser-250 by SLK is required for PXN redistribution and cell motility. Phosphorylation at Ser-272 promotes focal adhesion disassembly during cell migration.

Its subcellular location is the cytoplasm. It is found in the cytoskeleton. It localises to the cell junction. The protein resides in the focal adhesion. The protein localises to the cell cortex. Its function is as follows. Cytoskeletal protein involved in actin-membrane attachment at sites of cell adhesion to the extracellular matrix (focal adhesion). Recruits other proteins such as TRIM15 to focal adhesion. In Mus musculus (Mouse), this protein is Paxillin.